A 296-amino-acid chain; its full sequence is MLTLYGQERSPENSTTSTTDASDRRDETPSSEIVVRDIHAMTTTTELTRPQQRGSGGGYLSPSRSIAFSDGTTSSGENFTTVSREFNALVIAGSSMDNNSNGTNQSGGHRDVIRDERNELTRIGENDDVGDHGQVPEEDSNPWAIVPDDYNNRDGSENNIVLASSGGQNRMVTTASVQRVKREEVEAKITAWQTAKVAKINNRFKRQDAVINGWLNEQVHRANSWMKKIERKLEDRRAKAMEKTQNKVAKAQRKAEERRATAEGKRGTEVARVLEVANLMRAVGRPPAKRSFFSLS.

Disordered stretches follow at residues 1 to 78 (MLTL…SGEN), 121 to 142 (TRIG…DSNP), and 242 to 266 (EKTQ…EGKR). Basic and acidic residues predominate over residues 21 to 39 (ASDRRDETPSSEIVVRDIH). Polar residues-rich tracts occupy residues 41-53 (MTTT…PQQR) and 62-78 (PSRS…SGEN). Composition is skewed to basic and acidic residues over residues 121–135 (TRIG…HGQV) and 253–266 (RKAE…EGKR). A coiled-coil region spans residues 226–261 (MKKIERKLEDRRAKAMEKTQNKVAKAQRKAEERRAT).

Belongs to the remorin family. As to quaternary structure, forms homodimer and heterodimer with REM4.2. Interacts with KIN11. Phosphorylated by KIN11. Post-translationally, probably ubiquitinated and degraded by the 26S proteasome pathway. As to expression, predominantly detected in bud, stem, root, flower, silique, and leaves, and enhanced dramatically in senescence leaf.

The protein resides in the cell membrane. Its function is as follows. Collaborates with REM4.2 to positively regulate the BCTV and BSCTV susceptibility. The chain is Remorin 4.1 from Arabidopsis thaliana (Mouse-ear cress).